The primary structure comprises 680 residues: NADPH--cytochrome P450 reductase (680 aa).

The Lumenal portion of the chain corresponds to 1 to 5 (MALDK). A helical membrane pass occupies residues 6 to 23 (LDLYVIIVLAVAVAAYFA). At 24–680 (KNQFLDQPQD…VQNRYQEDVW (657 aa)) the chain is on the cytoplasmic side. One can recognise a Flavodoxin-like domain in the interval 60–204 (TLLLFGSQTG…DFLTWKDNVF (145 aa)). Residues 66–71 (SQTGTA), 117–120 (ATYG), 152–161 (LGNSTYEFYN), and Asp187 contribute to the FMN site. The region spanning 264–509 (THPYLAKISK…SGPRNKFNKF (246 aa)) is the FAD-binding FR-type domain. Arg283 lines the NADP(+) pocket. Residues 439–442 (RYYS), 457–459 (TAV), and 473–476 (GVVT) each bind FAD. NADP(+) is bound by residues Thr537, 599–600 (SR), 606–610 (KVYVQ), and Asp642. Trp680 contacts FAD.

It belongs to the NADPH--cytochrome P450 reductase family. This sequence in the N-terminal section; belongs to the flavodoxin family. The protein in the C-terminal section; belongs to the flavoprotein pyridine nucleotide cytochrome reductase family. It depends on FAD as a cofactor. The cofactor is FMN.

Its subcellular location is the endoplasmic reticulum membrane. It localises to the mitochondrion outer membrane. The protein resides in the cell membrane. It catalyses the reaction 2 oxidized [cytochrome P450] + NADPH = 2 reduced [cytochrome P450] + NADP(+) + H(+). Its function is as follows. This enzyme is required for electron transfer from NADP to cytochrome P450 in microsomes. It can also provide electron transfer to heme oxygenase and cytochrome B5. Involved in ergosterol biosynthesis. This chain is NADPH--cytochrome P450 reductase, found in Candida maltosa (Yeast).